The primary structure comprises 310 residues: Malate dehydrogenase (310 aa).

NAD(+) is bound by residues 7–12 (GAGNVG) and Asp32. Substrate contacts are provided by Arg81 and Arg87. NAD(+)-binding positions include Asn94 and 117-119 (VSN). Residues Asn119 and Arg150 each coordinate substrate. The active-site Proton acceptor is His174.

The protein belongs to the LDH/MDH superfamily. MDH type 3 family.

The enzyme catalyses (S)-malate + NAD(+) = oxaloacetate + NADH + H(+). Functionally, catalyzes the reversible oxidation of malate to oxaloacetate. This Chlorobium limicola (strain DSM 245 / NBRC 103803 / 6330) protein is Malate dehydrogenase.